The chain runs to 259 residues: Phosphoribosylaminoimidazole-succinocarboxamide synthase (259 aa).

This sequence belongs to the SAICAR synthetase family.

The catalysed reaction is 5-amino-1-(5-phospho-D-ribosyl)imidazole-4-carboxylate + L-aspartate + ATP = (2S)-2-[5-amino-1-(5-phospho-beta-D-ribosyl)imidazole-4-carboxamido]succinate + ADP + phosphate + 2 H(+). Its pathway is purine metabolism; IMP biosynthesis via de novo pathway; 5-amino-1-(5-phospho-D-ribosyl)imidazole-4-carboxamide from 5-amino-1-(5-phospho-D-ribosyl)imidazole-4-carboxylate: step 1/2. This Zymomonas mobilis subsp. mobilis (strain ATCC 31821 / ZM4 / CP4) protein is Phosphoribosylaminoimidazole-succinocarboxamide synthase.